Here is a 566-residue protein sequence, read N- to C-terminus: Proline--tRNA ligase (566 aa).

It belongs to the class-II aminoacyl-tRNA synthetase family. ProS type 1 subfamily. As to quaternary structure, homodimer.

It is found in the cytoplasm. It carries out the reaction tRNA(Pro) + L-proline + ATP = L-prolyl-tRNA(Pro) + AMP + diphosphate. In terms of biological role, catalyzes the attachment of proline to tRNA(Pro) in a two-step reaction: proline is first activated by ATP to form Pro-AMP and then transferred to the acceptor end of tRNA(Pro). As ProRS can inadvertently accommodate and process non-cognate amino acids such as alanine and cysteine, to avoid such errors it has two additional distinct editing activities against alanine. One activity is designated as 'pretransfer' editing and involves the tRNA(Pro)-independent hydrolysis of activated Ala-AMP. The other activity is designated 'posttransfer' editing and involves deacylation of mischarged Ala-tRNA(Pro). The misacylated Cys-tRNA(Pro) is not edited by ProRS. This is Proline--tRNA ligase from Bacillus cereus (strain Q1).